Consider the following 701-residue polypeptide: Polyribonucleotide nucleotidyltransferase (701 aa).

Residues D487 and D493 each coordinate Mg(2+). The region spanning 554–613 is the KH domain; it reads PTMIAMKIDTDKIRDVIGKGGATIRAICEETKASIDIEDDGSIKIFGESKEAAEAARQRV. The S1 motif domain occupies 623-691; that stretch reads GKIYVGKVER…NRGRIKLSIK (69 aa).

The protein belongs to the polyribonucleotide nucleotidyltransferase family. In terms of assembly, component of the RNA degradosome, which is a multiprotein complex involved in RNA processing and mRNA degradation. Mg(2+) serves as cofactor.

It is found in the cytoplasm. The enzyme catalyses RNA(n+1) + phosphate = RNA(n) + a ribonucleoside 5'-diphosphate. Its function is as follows. Involved in mRNA degradation. Catalyzes the phosphorolysis of single-stranded polyribonucleotides processively in the 3'- to 5'-direction. This Pseudomonas savastanoi pv. phaseolicola (strain 1448A / Race 6) (Pseudomonas syringae pv. phaseolicola (strain 1448A / Race 6)) protein is Polyribonucleotide nucleotidyltransferase.